The primary structure comprises 158 residues: MPLTHLNEENQPKMVDIGDKETTERIALASGRISMNKEAYDAIINHGVKKGPVLQTAIIAGIMGAKKTSELIPMCHPIMLNGVDIDILEEKETHSFKLYARVKTQAKTGVEMEALMSVSIGLLTIYDMVKAIDKSMTISGVMLEHKSGGKSGDYNAKK.

Substrate contacts are provided by residues 74-76 (MCH) and 112-113 (ME). The active site involves aspartate 127.

It belongs to the MoaC family. As to quaternary structure, homohexamer; trimer of dimers.

The enzyme catalyses (8S)-3',8-cyclo-7,8-dihydroguanosine 5'-triphosphate = cyclic pyranopterin phosphate + diphosphate. The protein operates within cofactor biosynthesis; molybdopterin biosynthesis. Functionally, catalyzes the conversion of (8S)-3',8-cyclo-7,8-dihydroguanosine 5'-triphosphate to cyclic pyranopterin monophosphate (cPMP). The sequence is that of Cyclic pyranopterin monophosphate synthase from Helicobacter pylori (strain HPAG1).